Here is a 372-residue protein sequence, read N- to C-terminus: Alanine dehydrogenase 2 (372 aa).

His-95 is a catalytic residue. 169–199 (KVTIIGGGQAGTNAAKIALGLGADVTILDVN) is an NAD(+) binding site.

It belongs to the AlaDH/PNT family.

The enzyme catalyses L-alanine + NAD(+) + H2O = pyruvate + NH4(+) + NADH + H(+). The protein operates within amino-acid degradation; L-alanine degradation via dehydrogenase pathway; NH(3) and pyruvate from L-alanine: step 1/1. In terms of biological role, may play a role in cell wall synthesis as L-alanine is an important constituent of the peptidoglycan layer. The protein is Alanine dehydrogenase 2 (ald2) of Staphylococcus aureus (strain COL).